Reading from the N-terminus, the 71-residue chain is Peptide Ctri10261 (71 aa).

Residues 1 to 23 form the signal peptide; sequence MKIPLILVTIAIILLMVPTESDA. F37 is modified (phenylalanine amide). The propeptide occupies 41-71; the sequence is SLKNRDYFDYMQDPSLSNADLRELEELLEDY.

Belongs to the non-disulfide-bridged peptide (NDBP) superfamily. Short antimicrobial peptide (group 4) family. In terms of tissue distribution, expressed by the venom gland.

It localises to the secreted. Antimicrobial peptide. The polypeptide is Peptide Ctri10261 (Chaerilus tricostatus (Scorpion)).